A 479-amino-acid chain; its full sequence is RHO1 GEF localizing protein 1 (479 aa).

The segment at 460–479 (SQKDPSRTDPSKLRRVPVIQ) is disordered.

Regulator of RHO1 signaling that acts as a cofactor required for the efficient localization of the TUS1 GTP exchange factor (GEF) for RHO1 to the bud neck during all phases of cytokinesis. RHO1 is a key, essential hub protein in the cell wall integrity (CWI) pathway in which activated RHO1-GTP binds directly to and activates multiple different downstream effectors required for cell wall synthesis and actin assembly during cytokinesis. This Saccharomyces cerevisiae (strain ATCC 204508 / S288c) (Baker's yeast) protein is RHO1 GEF localizing protein 1.